A 98-amino-acid polypeptide reads, in one-letter code: uncharacterized protein (98 aa).

The next 2 helical transmembrane spans lie at 13–33 (LFSLAINEPSPTFALTIIAIF) and 65–85 (IMVIISYLKYVNLPCSFIFIS).

The protein resides in the membrane. This is an uncharacterized protein from Saccharomyces cerevisiae (strain ATCC 204508 / S288c) (Baker's yeast).